The primary structure comprises 244 residues: Tyrosine recombinase XerD-like (244 aa).

One can recognise a Core-binding (CB) domain in the interval 1 to 73 (MRDRISAFLE…ACNQFLYFLY (73 aa)). The 155-residue stretch at 90–244 (AEKKTEKPEI…KTVLTLEKYR (155 aa)) folds into the Tyr recombinase domain. Catalysis depends on residues K150 and R211. The active-site O-(3'-phospho-DNA)-tyrosine intermediate is Y243.

It belongs to the 'phage' integrase family. XerD-like subfamily.

Its subcellular location is the cytoplasm. Putative tyrosine recombinase. Not involved in the cutting and rejoining of the recombining DNA molecules on dif(SL) site. The protein is Tyrosine recombinase XerD-like of Streptococcus pneumoniae (strain CGSP14).